The following is a 313-amino-acid chain: PDCD10 and GCKIII kinases-associated protein 1 (313 aa).

The segment at 40–89 (RLKGTQNSEVEVPRNALHDGSLSNSESRGSTTGLPHQGPLPQEDSEERPC) is disordered. 2 positions are modified to phosphoserine: Ser60 and Ser64. The segment covering 60 to 73 (SLSNSESRGSTTGL) has biased composition (polar residues). Thr104 carries the phosphothreonine modification. Phosphoserine is present on residues Ser107, Ser237, and Ser240. A disordered region spans residues 253-286 (YFKEEGPTHPTPAADSGSEREDPHTYNGDREGVV). Over residues 269–285 (GSEREDPHTYNGDREGV) the composition is skewed to basic and acidic residues.

In terms of assembly, interacts with KEAP1; this interaction prevents the ubiquitination of KEAP1 by TRIM25, thus protecting KEAP1 from degradation. Found in association with PDCD10 and members of the STE20 kinases, such as STK24, STK25 and STK26.

It is found in the cell membrane. Acts as a tumor suppressor. Acts as a tumor suppressor for colorectal cancer cell proliferation by targeting KEAP1/USP17/ELK1/CDK6 axis. In Mus musculus (Mouse), this protein is PDCD10 and GCKIII kinases-associated protein 1.